The sequence spans 229 residues: Uracil-DNA glycosylase (229 aa).

D71 serves as the catalytic Proton acceptor.

It belongs to the uracil-DNA glycosylase (UDG) superfamily. UNG family.

The protein localises to the cytoplasm. It catalyses the reaction Hydrolyzes single-stranded DNA or mismatched double-stranded DNA and polynucleotides, releasing free uracil.. Excises uracil residues from the DNA which can arise as a result of misincorporation of dUMP residues by DNA polymerase or due to deamination of cytosine. This Campylobacter lari (strain RM2100 / D67 / ATCC BAA-1060) protein is Uracil-DNA glycosylase.